The primary structure comprises 434 residues: Forkhead box protein A2-A (434 aa).

The segment at residues 149–243 is a DNA-binding region (fork-head); sequence KPPYSYISLI…ENGCYLRRQK (95 aa). A compositionally biased stretch (basic and acidic residues) spans 249 to 262; that stretch reads KKPSLREGGGKKLS. Disordered stretches follow at residues 249–339 and 408–434; these read KKPS…QSHL and SGLE…MNSS. Composition is skewed to low complexity over residues 263–291 and 317–333; these read EGAS…SSSP and ASQA…VLSH. Residues 408–422 are compositionally biased toward polar residues; that stretch reads SGLESSPITSDTSYY.

At gastrula stage, expressed in both the anterior and posterior endoderm, with endodermal expression persisting into early tailbud stages. Expression is absent in gastrula stage ectoderm. During tailbud stages, expressed in the pharyngeal region, the neural floor plate, the midbrain, hindbrain and in cranial neural crest cells. Expressed in the foregut of hatching larvae. In tadpoles, expressed in the pharyngeal pouches and in other anterior endodermal regions. Within the tadpole nervous system, expressed in the neural floor plate, at high levels in the ventral midbrain and hindbrain, and at lower levels in the spinal cord. Expressed in the adult lung and brain.

It localises to the nucleus. In terms of biological role, acts as a transcriptional activator during early development, limiting the extent of mesoderm formation in the gastrula. Binds to DNA via the target sequence 5'-GT[AC]AACA-3', with 5'-GTAAACA-3' being the preferred binding site. The protein is Forkhead box protein A2-A (foxa2-a) of Xenopus laevis (African clawed frog).